Here is a 66-residue protein sequence, read N- to C-terminus: uncharacterized protein (66 aa).

This is an uncharacterized protein from Homo sapiens (Human).